Reading from the N-terminus, the 530-residue chain is Glutamate--cysteine ligase (530 aa).

Belongs to the glutamate--cysteine ligase type 1 family. Type 1 subfamily.

It carries out the reaction L-cysteine + L-glutamate + ATP = gamma-L-glutamyl-L-cysteine + ADP + phosphate + H(+). It participates in sulfur metabolism; glutathione biosynthesis; glutathione from L-cysteine and L-glutamate: step 1/2. The chain is Glutamate--cysteine ligase from Pseudomonas entomophila (strain L48).